The chain runs to 195 residues: Keratin-associated protein 4-3 (195 aa).

A run of 28 repeats spans residues 34–38 (CCRTT), 39–43 (CCRPS), 44–48 (CCISS), 49–53 (CCRPS), 54–58 (CCISS), 59–63 (CCKPS), 64–68 (CCRTT), 69–73 (CCRPS), 74–78 (CCISS), 79–83 (CCRPS), 84–88 (CCISS), 89–93 (CCKPS), 94–98 (CCRTT), 99–103 (CCRPS), 104–108 (CCISS), 109–113 (CCRPS), 114–118 (CCISS), 119–123 (CCKPS), 124–128 (CCQTT), 129–133 (CCRPS), 134–138 (CCISS), 144–148 (CCQPS), 149–153 (CCRPA), 154–158 (CCISS), 159–163 (CCHPS), 164–168 (CCVSS), 179–183 (CCRTT), and 189–193 (CCGSS). The segment at 34 to 193 (CCRTTCCRPS…CFHPICCGSS (160 aa)) is 29 X 5 AA repeats of C-C-[GIKRQVH]-[SPT]-[STA].

Belongs to the KRTAP type 4 family. Interacts with hair keratins. In terms of tissue distribution, expressed specifically in the middle/uper portions of the hair cortex. Not detected in the hair matrix or cuticle.

Its function is as follows. In the hair cortex, hair keratin intermediate filaments are embedded in an interfilamentous matrix, consisting of hair keratin-associated proteins (KRTAP), which are essential for the formation of a rigid and resistant hair shaft through their extensive disulfide bond cross-linking with abundant cysteine residues of hair keratins. The matrix proteins include the high-sulfur and high-glycine-tyrosine keratins. The polypeptide is Keratin-associated protein 4-3 (KRTAP4-3) (Homo sapiens (Human)).